Here is a 633-residue protein sequence, read N- to C-terminus: Extracellular metalloproteinase 5 (633 aa).

A signal peptide spans 1–21 (MHGLLLAAAGLLSLPLHVVAH). Residues 22-245 (PQPSTSLAGR…HNVVDYVSHA (224 aa)) constitute a propeptide that is removed on maturation. The N-linked (GlcNAc...) asparagine glycan is linked to asparagine 285. Histidine 428 serves as a coordination point for Zn(2+). The active site involves glutamate 429. Histidine 432 contacts Zn(2+). Asparagine 592 and asparagine 621 each carry an N-linked (GlcNAc...) asparagine glycan.

It belongs to the peptidase M36 family. The cofactor is Zn(2+).

Its subcellular location is the secreted. Functionally, secreted metalloproteinase probably acting as a virulence factor. In Trichophyton rubrum (Athlete's foot fungus), this protein is Extracellular metalloproteinase 5 (MEP5).